The sequence spans 229 residues: Potassium/proton antiporter CemA (229 aa).

Transmembrane regions (helical) follow at residues 7–27, 114–134, 154–174, and 189–209; these read LIPL…SLSF, IICF…LVIL, ILLL…ELMI, and IISG…KYWI.

The protein belongs to the CemA family.

The protein resides in the plastid. It is found in the chloroplast inner membrane. The enzyme catalyses K(+)(in) + H(+)(out) = K(+)(out) + H(+)(in). Contributes to K(+)/H(+) antiport activity by supporting proton efflux to control proton extrusion and homeostasis in chloroplasts in a light-dependent manner to modulate photosynthesis. Prevents excessive induction of non-photochemical quenching (NPQ) under continuous-light conditions. Indirectly promotes efficient inorganic carbon uptake into chloroplasts. The protein is Potassium/proton antiporter CemA of Fagus sylvatica (Beechnut).